A 387-amino-acid polypeptide reads, in one-letter code: Eukaryotic translation initiation factor 3 subunit M (387 aa).

The 160-residue stretch at 181–340 (LSSKVMIELL…QKVHISSTMH (160 aa)) folds into the PCI domain.

This sequence belongs to the eIF-3 subunit M family. As to quaternary structure, component of the eukaryotic translation initiation factor 3 (eIF-3) complex. The eIF-3 complex interacts with pix.

It is found in the cytoplasm. The protein resides in the golgi apparatus. Component of the eukaryotic translation initiation factor 3 (eIF-3) complex, which is involved in protein synthesis of a specialized repertoire of mRNAs and, together with other initiation factors, stimulates binding of mRNA and methionyl-tRNAi to the 40S ribosome. The eIF-3 complex specifically targets and initiates translation of a subset of mRNAs involved in cell proliferation. This is Eukaryotic translation initiation factor 3 subunit M from Drosophila sechellia (Fruit fly).